The chain runs to 123 residues: Methicillin resistance regulatory protein MecI (123 aa).

Residues 7–71 constitute a DNA-binding region (H-T-H motif); the sequence is EISSAEWEFM…KDNKIFQYYS (65 aa). An important for dimerization region spans residues 74-123; that stretch reads EESDIKYKTSKNFINKVYKGGFNSLVLNFVEKEDLSQDEIEELRNILNKK.

It belongs to the BlaI transcriptional regulatory family. Monomer and homodimer. Upon exposure to beta-lactams, proteolytic cleavage at a single site impairs dimerization and abolishes repressor activity.

It is found in the cytoplasm. Transcriptional repressor that constitutively blocks the transcription of the gene for the penicillin-binding protein MecA. Binds DNA as a dimer. This is Methicillin resistance regulatory protein MecI (mecI) from Staphylococcus aureus (strain Mu50 / ATCC 700699).